We begin with the raw amino-acid sequence, 312 residues long: Malate dehydrogenase (312 aa).

NAD(+) is bound by residues 12–17 and aspartate 36; that span reads GAGFTG. Residues arginine 87 and arginine 93 each contribute to the substrate site. Residues asparagine 100 and 123 to 125 contribute to the NAD(+) site; that span reads LTN. Asparagine 125 is a substrate binding site. Serine 149 is subject to Phosphoserine. Residue arginine 156 coordinates substrate. Histidine 180 (proton acceptor) is an active-site residue.

This sequence belongs to the LDH/MDH superfamily. MDH type 3 family.

The catalysed reaction is (S)-malate + NAD(+) = oxaloacetate + NADH + H(+). Catalyzes the reversible oxidation of malate to oxaloacetate. The polypeptide is Malate dehydrogenase (Geobacillus kaustophilus (strain HTA426)).